The chain runs to 527 residues: Matrix metalloproteinase-19 (527 aa).

Residues 1 to 18 (MDWQQLWLAFLLPMTVSG) form the signal peptide. A propeptide spanning residues 19–98 (RALGPTEKEA…EDPFNQKSLK (80 aa)) is cleaved from the precursor. The Cysteine switch signature appears at 84 to 91 (PRCGLEDP). Cysteine 86 contributes to the Zn(2+) binding site. Asparagine 109 carries an N-linked (GlcNAc...) asparagine glycan. Histidine 213 is a Zn(2+) binding site. Residue glutamate 214 is part of the active site. Residues histidine 217 and histidine 223 each contribute to the Zn(2+) site. Hemopexin repeat units lie at residues 286-333 (PNPC…WEGL), 334-372 (PGNL…FPMK), 377-425 (EPNL…FTGV), and 426-471 (PDRP…WMHC). A disulfide bond links cysteine 289 and cysteine 471. N-linked (GlcNAc...) asparagine glycosylation is found at asparagine 464 and asparagine 479. The interval 473–500 (SQTPDTNSSTGDVTPSTTDTVLGTTPST) is disordered. Aspartate 512 carries the GPI-anchor amidated aspartate lipid modification. Residues 513-527 (SASLSFSANVTLLGA) constitute a propeptide, removed in mature form. Asparagine 521 carries an N-linked (GlcNAc...) asparagine glycan.

Belongs to the peptidase M10A family. Zn(2+) is required as a cofactor. Ca(2+) serves as cofactor. In terms of processing, activated by autolytic cleavage after Lys-98. Post-translationally, tyrosine phosphorylated by PKDCC/VLK. In terms of tissue distribution, highly expressed in the liver. Expressed in the arterial tunica media of large blood vessels.

It is found in the cell membrane. Its subcellular location is the secreted. It localises to the extracellular space. The protein resides in the extracellular matrix. Endopeptidase that degrades various components of the extracellular matrix, such as aggrecan and cartilage oligomeric matrix protein (comp), during development, haemostasis and pathological conditions (arthritic disease). May also play a role in neovascularization or angiogenesis. Hydrolyzes collagen type IV, laminin, nidogen, nascin-C isoform, fibronectin, and type I gelatin. The chain is Matrix metalloproteinase-19 (Mmp19) from Mus musculus (Mouse).